Reading from the N-terminus, the 476-residue chain is Aspartyl/glutamyl-tRNA(Asn/Gln) amidotransferase subunit B (476 aa).

Belongs to the GatB/GatE family. GatB subfamily. In terms of assembly, heterotrimer of A, B and C subunits.

The enzyme catalyses L-glutamyl-tRNA(Gln) + L-glutamine + ATP + H2O = L-glutaminyl-tRNA(Gln) + L-glutamate + ADP + phosphate + H(+). The catalysed reaction is L-aspartyl-tRNA(Asn) + L-glutamine + ATP + H2O = L-asparaginyl-tRNA(Asn) + L-glutamate + ADP + phosphate + 2 H(+). In terms of biological role, allows the formation of correctly charged Asn-tRNA(Asn) or Gln-tRNA(Gln) through the transamidation of misacylated Asp-tRNA(Asn) or Glu-tRNA(Gln) in organisms which lack either or both of asparaginyl-tRNA or glutaminyl-tRNA synthetases. The reaction takes place in the presence of glutamine and ATP through an activated phospho-Asp-tRNA(Asn) or phospho-Glu-tRNA(Gln). The chain is Aspartyl/glutamyl-tRNA(Asn/Gln) amidotransferase subunit B from Geobacillus kaustophilus (strain HTA426).